Here is a 295-residue protein sequence, read N- to C-terminus: Probable endonuclease 4 (295 aa).

9 residues coordinate Zn(2+): H78, H118, E154, D188, H191, H225, D238, H240, and E270.

The protein belongs to the AP endonuclease 2 family. Zn(2+) serves as cofactor.

The enzyme catalyses Endonucleolytic cleavage to 5'-phosphooligonucleotide end-products.. In terms of biological role, endonuclease IV plays a role in DNA repair. It cleaves phosphodiester bonds at apurinic or apyrimidinic (AP) sites, generating a 3'-hydroxyl group and a 5'-terminal sugar phosphate. This Vibrio campbellii (strain ATCC BAA-1116) protein is Probable endonuclease 4.